Here is a 75-residue protein sequence, read N- to C-terminus: Penaeidin-3l (75 aa).

Residues 1–19 form the signal peptide; sequence MRLVVCLVFLASFALVCQG. Glutamine 20 carries the pyrrolidone carboxylic acid modification. 3 disulfides stabilise this stretch: cysteine 44-cysteine 59, cysteine 48-cysteine 66, and cysteine 60-cysteine 67. A Serine amide modification is found at serine 74.

This sequence belongs to the penaeidin family.

It is found in the cytoplasmic granule. In terms of biological role, antibacterial and antifungal activity. Presents chitin-binding activity. The protein is Penaeidin-3l of Penaeus setiferus (Atlantic white shrimp).